The primary structure comprises 591 residues: Fidgetin-like protein 1 (591 aa).

Disordered regions lie at residues 1–117 (MYSP…KSSL) and 223–249 (GQEPQKSKFQIPLDRQSSSQSNHSQPI). The span at 17–26 (KRPETEENRG) shows a compositional bias: basic and acidic residues. Residues 76–93 (DDDPESIVIDEDDEEDEP) show a composition bias toward acidic residues. The segment covering 237–249 (RQSSSQSNHSQPI) has biased composition (polar residues). ATP contacts are provided by residues Ala319 and 359-364 (GTGKTM).

It belongs to the AAA ATPase family. As to quaternary structure, hexamer. Requires Mg(2+) as cofactor.

The protein localises to the nucleus. The enzyme catalyses ATP + H2O = ADP + phosphate + H(+). Has a role in spindle assembly which acts in the progression through mitosis during embryogenesis. Required for fertility. The chain is Fidgetin-like protein 1 (figl-1) from Caenorhabditis briggsae.